The primary structure comprises 141 residues: Nucleoside diphosphate kinase (141 aa).

Residues Lys11, Phe59, Arg87, Thr93, Arg104, and Asn114 each coordinate ATP. Residue His117 is the Pros-phosphohistidine intermediate of the active site.

This sequence belongs to the NDK family. As to quaternary structure, homotetramer. It depends on Mg(2+) as a cofactor.

The protein localises to the cytoplasm. The catalysed reaction is a 2'-deoxyribonucleoside 5'-diphosphate + ATP = a 2'-deoxyribonucleoside 5'-triphosphate + ADP. The enzyme catalyses a ribonucleoside 5'-diphosphate + ATP = a ribonucleoside 5'-triphosphate + ADP. Major role in the synthesis of nucleoside triphosphates other than ATP. The ATP gamma phosphate is transferred to the NDP beta phosphate via a ping-pong mechanism, using a phosphorylated active-site intermediate. The polypeptide is Nucleoside diphosphate kinase (Pseudomonas fluorescens (strain ATCC BAA-477 / NRRL B-23932 / Pf-5)).